Reading from the N-terminus, the 162-residue chain is Ribosome maturation factor RimM (162 aa).

Positions 90 to 161 constitute a PRC barrel domain; that stretch reads EDCYYEADIV…KIIIKPLEVW (72 aa).

It belongs to the RimM family. Binds ribosomal protein uS19.

The protein resides in the cytoplasm. Functionally, an accessory protein needed during the final step in the assembly of 30S ribosomal subunit, possibly for assembly of the head region. Essential for efficient processing of 16S rRNA. May be needed both before and after RbfA during the maturation of 16S rRNA. It has affinity for free ribosomal 30S subunits but not for 70S ribosomes. The sequence is that of Ribosome maturation factor RimM from Clostridium novyi (strain NT).